A 268-amino-acid polypeptide reads, in one-letter code: Agamous-like MADS-box protein AGL15 (268 aa).

Residues 1 to 61 form the MADS-box domain; sequence MGRGKIEIKR…GKLFEYSSTG (61 aa). The K-box domain maps to 80 to 170; it reads AEEDCAEVDI…RRQVQELRSF (91 aa). The disordered stretch occupies residues 205–268; the sequence is TDSDTTLQLG…PEAKRQRFSV (64 aa). The segment covering 218–232 has biased composition (basic and acidic residues); it reads EAHDRRTNEGERESP. Residues 233 to 244 are compositionally biased toward polar residues; that stretch reads SSDSVTTNTSSE.

Homodimer. Interacts with SVP, AGL24, AP1, AGL6, AG, AGL1, AGL11, AGL5, AGL16, SOC1 and AGL21. Expressed at low levels in flowers and siliques. Also present in seedlings. Detected during embryogenesis and accumulates during early seed development (at protein level). Expressed in shoot apices and the base of leaf petioles.

It is found in the nucleus. The protein resides in the cytoplasm. In terms of biological role, transcription factor involved in the negative regulation of flowering, probably through the photoperiodic pathway. Acts both as an activator and as a repressor of transcription. Binds DNA in a sequence-specific manner in large CArG motif 5'-CC (A/T)8 GG-3'. Participates probably in the regulation of programs active during the early stages of embryo development. Prevents premature perianth senescence and abscission, fruits development and seed desiccation. Stimulates the expression of at least DTA4, LEC2, FUS3, ABI3, AT4G38680/CSP2 and GRP2B/CSP4. Can enhance somatic embryo development in vitro. In Arabidopsis thaliana (Mouse-ear cress), this protein is Agamous-like MADS-box protein AGL15 (AGL15).